We begin with the raw amino-acid sequence, 248 residues long: Proteasome subunit alpha type-5 (248 aa).

Belongs to the peptidase T1A family. As to quaternary structure, the 26S proteasome consists of a 20S proteasome core and two 19S regulatory subunits. The 20S proteasome core is composed of 28 subunits that are arranged in four stacked rings, resulting in a barrel-shaped structure. The two end rings are each formed by seven alpha subunits, and the two central rings are each formed by seven beta subunits. The catalytic chamber with the active sites is on the inside of the barrel.

The protein localises to the cytoplasm. It localises to the nucleus. In terms of biological role, the proteasome is a multicatalytic proteinase complex which is characterized by its ability to cleave peptides with Arg, Phe, Tyr, Leu, and Glu adjacent to the leaving group at neutral or slightly basic pH. The proteasome has an ATP-dependent proteolytic activity. This Caenorhabditis elegans protein is Proteasome subunit alpha type-5 (pas-5).